The primary structure comprises 388 residues: MRYLTAGESHGQALTAIIEGIPAGLTLSAELINKELKRRQGGYGRGARMRIESDRVHISSGVRHGKTTGAPITLTIQNKDHQKWLDIMAVEAVEEQIKLKRKITHPRPGHADLVGGIKYRFDDLRNALERSSARETAMRVAVGAVAKVVLTELGIETANHVLVFGGIEVAVPEAMPFTDIKKAAEASDLSIVNPKQEATIKAHIDQVKKEGDTLGGIIETIIHGLPAGLGSYVQWDRKLDAKIAQAVLSINAFKGVEFGMGFDMGYQKGSQVMDEIIWHETSGYSRRTNRLGGFEAGMTTGQPIVVKGVMKPIPTLYKPLMSVDTETHEPYKATVERSDPTALPAAGVVMENVVATVITKEILEQFPSDNMTDLKQAFFAYCDYVHHF.

Residues Arg39 and Arg45 each contribute to the NADP(+) site. Residues 130–132, 251–252, Ala296, 311–315, and Arg337 contribute to the FMN site; these read RSS, NA, and KPIPT.

Belongs to the chorismate synthase family. As to quaternary structure, homotetramer. FMNH2 serves as cofactor.

The enzyme catalyses 5-O-(1-carboxyvinyl)-3-phosphoshikimate = chorismate + phosphate. Its pathway is metabolic intermediate biosynthesis; chorismate biosynthesis; chorismate from D-erythrose 4-phosphate and phosphoenolpyruvate: step 7/7. Catalyzes the anti-1,4-elimination of the C-3 phosphate and the C-6 proR hydrogen from 5-enolpyruvylshikimate-3-phosphate (EPSP) to yield chorismate, which is the branch point compound that serves as the starting substrate for the three terminal pathways of aromatic amino acid biosynthesis. This reaction introduces a second double bond into the aromatic ring system. This chain is Chorismate synthase, found in Streptococcus equi subsp. zooepidemicus (strain H70).